A 223-amino-acid polypeptide reads, in one-letter code: Endonuclease V (223 aa).

Residues Asp35 and Asp103 each coordinate Mg(2+).

The protein belongs to the endonuclease V family. The cofactor is Mg(2+).

The protein localises to the cytoplasm. The enzyme catalyses Endonucleolytic cleavage at apurinic or apyrimidinic sites to products with a 5'-phosphate.. In terms of biological role, DNA repair enzyme involved in the repair of deaminated bases. Selectively cleaves double-stranded DNA at the second phosphodiester bond 3' to a deoxyinosine leaving behind the intact lesion on the nicked DNA. This is Endonuclease V from Cronobacter sakazakii (strain ATCC BAA-894) (Enterobacter sakazakii).